The chain runs to 169 residues: Translationally-controlled tumor protein homolog (169 aa).

One can recognise a TCTP domain in the interval Met1–Val169.

Belongs to the TCTP family.

It localises to the cytoplasm. The protein resides in the cytoskeleton. In terms of biological role, involved in protein synthesis. Involved in microtubule stabilization. The sequence is that of Translationally-controlled tumor protein homolog from Alternaria alternata (Alternaria rot fungus).